The sequence spans 2325 residues: Protein Ycf2 (2325 aa).

3 disordered regions span residues 168 to 189 (SSQL…GTED), 221 to 251 (TEIE…EMNN), and 947 to 1006 (KRKK…KRKE). Residues 230-240 (KGLSGSSSKSR) are compositionally biased toward low complexity. 2 stretches are compositionally biased toward basic and acidic residues: residues 241-250 (LFTEGEKEMN) and 955-1004 (KRKE…PEKR). 1436–1443 (GSIGSGRS) contacts ATP. Disordered stretches follow at residues 1510 to 1529 (YEDR…DYEP), 1855 to 1996 (LVGS…LLRP), and 2063 to 2179 (PAEE…DGFS). Residues 1861 to 1976 (TEEEVEGTEE…VEGTEDEEGE (116 aa)) show a composition bias toward acidic residues. The span at 1977–1989 (GTEKDSSQFDNDR) shows a compositional bias: basic and acidic residues. 2 stretches are compositionally biased toward acidic residues: residues 2063–2080 (PAEE…EALE) and 2087–2162 (GEEE…ENDS).

It belongs to the Ycf2 family.

The protein resides in the plastid. It localises to the chloroplast stroma. Functionally, probable ATPase of unknown function. Its presence in a non-photosynthetic plant (Epifagus virginiana) and experiments in tobacco indicate that it has an essential function which is probably not related to photosynthesis. The polypeptide is Protein Ycf2 (Oenothera biennis (German evening primrose)).